The following is a 308-amino-acid chain: MAQEVVEGFKFEQRHGKERVRVARVWRTPQGRHFVVEWRVGITLFSDCVNSYLRDDNSDIVATDTMKNTVYAKAKECSDILSVEDFAILLAKHFVSFYKKVTGAIVNIVEKPWERVIVDGQPHQHGFTLGSEKHTTEAIVQKSGSLQLTSGIEGLSVLKTTQSGFENFIRNKYTALPDTRERILATEVTALWRYSYESLYNLPQKPLYFTDKYLEVKKVLADTFFGPPNRGVYSPSVQNTLYLMAKATLNRFPDIAYVHLKMPNLHFLPVNISSKDGPIVKFEDDVYLPTDEPHGSIEASLSRVWSKL.

Active-site charge relay system residues include K17 and T63. Positions 63, 64, 165, 182, 237, 238, and 264 each coordinate urate. The active-site Charge relay system is the H266. The short motif at 306–308 (SKL) is the Microbody targeting signal element.

Belongs to the uricase family. As to quaternary structure, homotetramer. Expressed predominantly in the uninfected cells of the central tissue of the root nodule. Also expressed in the nodule parenchyma cells and vascular tissue, in the roots, stems and leaves of uninfected adult plants, and in the cotyledons, roots and hypocotyls of developing seedlings. Localized to the metaxylem parenchyma cells and phloem fibers of developing roots.

It is found in the peroxisome. It catalyses the reaction urate + O2 + H2O = 5-hydroxyisourate + H2O2. It functions in the pathway purine metabolism; urate degradation; (S)-allantoin from urate: step 1/3. Catalyzes the oxidation of uric acid to 5-hydroxyisourate, which is further processed to form (S)-allantoin. This chain is Uricase-2 (URIII), found in Phaseolus vulgaris (Kidney bean).